Here is a 365-residue protein sequence, read N- to C-terminus: Chorismate synthase (365 aa).

2 residues coordinate NADP(+): R48 and R54. FMN is bound by residues 131-133 (RSS), 243-244 (NA), G288, 303-307 (KPTSS), and R329.

It belongs to the chorismate synthase family. In terms of assembly, homotetramer. Requires FMNH2 as cofactor.

It carries out the reaction 5-O-(1-carboxyvinyl)-3-phosphoshikimate = chorismate + phosphate. It participates in metabolic intermediate biosynthesis; chorismate biosynthesis; chorismate from D-erythrose 4-phosphate and phosphoenolpyruvate: step 7/7. Its function is as follows. Catalyzes the anti-1,4-elimination of the C-3 phosphate and the C-6 proR hydrogen from 5-enolpyruvylshikimate-3-phosphate (EPSP) to yield chorismate, which is the branch point compound that serves as the starting substrate for the three terminal pathways of aromatic amino acid biosynthesis. This reaction introduces a second double bond into the aromatic ring system. The chain is Chorismate synthase from Rhizobium etli (strain CIAT 652).